Reading from the N-terminus, the 176-residue chain is Adenine phosphoribosyltransferase (176 aa).

This sequence belongs to the purine/pyrimidine phosphoribosyltransferase family. In terms of assembly, homodimer.

It is found in the cytoplasm. The enzyme catalyses AMP + diphosphate = 5-phospho-alpha-D-ribose 1-diphosphate + adenine. It functions in the pathway purine metabolism; AMP biosynthesis via salvage pathway; AMP from adenine: step 1/1. In terms of biological role, catalyzes a salvage reaction resulting in the formation of AMP, that is energically less costly than de novo synthesis. The protein is Adenine phosphoribosyltransferase of Roseobacter denitrificans (strain ATCC 33942 / OCh 114) (Erythrobacter sp. (strain OCh 114)).